A 224-amino-acid polypeptide reads, in one-letter code: Small ribosomal subunit protein uS2 (224 aa).

Basic and acidic residues predominate over residues 1–14 (MAEAKPAPEKEAAV). The disordered stretch occupies residues 1–32 (MAEAKPAPEKEAAVKTESVPVADDEAASAKEG).

It belongs to the universal ribosomal protein uS2 family.

This chain is Small ribosomal subunit protein uS2, found in Methanosarcina mazei (strain ATCC BAA-159 / DSM 3647 / Goe1 / Go1 / JCM 11833 / OCM 88) (Methanosarcina frisia).